The sequence spans 491 residues: Bifunctional NAD(P)H-hydrate repair enzyme Nnr (491 aa).

Positions 1–230 are NAD(P)H-hydrate epimerase; the sequence is MRRDINNFLF…KIGIPKEAEY (230 aa). Residues 35-230 form the YjeF N-terminal domain; that stretch reads MAIIDDNAEF…KIGIPKEAEY (196 aa). The NADPHX 1; for epimerase activity stretch occupies residues 80–84; sequence NNGGD. Positions 81 and 154 each coordinate K(+). Residues 158 to 164 are NADPHX 1; for epimerase activity; it reads GTGVKGE. Residue Asp192 coordinates (6S)-NADPHX. Thr195 is a binding site for K(+). The YjeF C-terminal domain maps to 232 to 490; it reads VGWGDLKALR…EKIPNVLKIF (259 aa). Residues 232–491 form an ADP-dependent (S)-NAD(P)H-hydrate dehydratase region; that stretch reads VGWGDLKALR…KIPNVLKIFQ (260 aa). (6S)-NADPHX is bound at residue Gly332. The NADPHX 2; for dehydratase activity stretch occupies residues 380-386; the sequence is HKREFEY. ADP-binding positions include 404 to 408 and 423 to 432; these read KGKYD and NAGLTKGGTG. Asp433 serves as a coordination point for (6S)-NADPHX.

It in the N-terminal section; belongs to the NnrE/AIBP family. In the C-terminal section; belongs to the NnrD/CARKD family. K(+) is required as a cofactor.

It carries out the reaction (6S)-NADHX + ADP = AMP + phosphate + NADH + H(+). It catalyses the reaction (6S)-NADPHX + ADP = AMP + phosphate + NADPH + H(+). The enzyme catalyses (6R)-NADHX = (6S)-NADHX. The catalysed reaction is (6R)-NADPHX = (6S)-NADPHX. Bifunctional enzyme that catalyzes the epimerization of the S- and R-forms of NAD(P)HX and the dehydration of the S-form of NAD(P)HX at the expense of ADP, which is converted to AMP. This allows the repair of both epimers of NAD(P)HX, a damaged form of NAD(P)H that is a result of enzymatic or heat-dependent hydration. This chain is Bifunctional NAD(P)H-hydrate repair enzyme Nnr (nnr), found in Methanocaldococcus jannaschii (strain ATCC 43067 / DSM 2661 / JAL-1 / JCM 10045 / NBRC 100440) (Methanococcus jannaschii).